A 357-amino-acid chain; its full sequence is 3'(2'),5'-bisphosphate nucleotidase (357 aa).

The Proton acceptor role is filled by D49. 4 residues coordinate Mg(2+): E72, D142, I144, and D145. Residue T147 is the Proton acceptor of the active site. T147, H241, S264, K267, R281, and D294 together coordinate adenosine 3',5'-bisphosphate. Positions 241, 264, 267, 281, and 294 each coordinate AMP. Mg(2+) is bound at residue D294.

It belongs to the inositol monophosphatase superfamily. It depends on Mg(2+) as a cofactor.

It localises to the cytoplasm. Its subcellular location is the nucleus. The enzyme catalyses 3'-phosphoadenylyl sulfate + H2O = adenosine 5'-phosphosulfate + phosphate. The catalysed reaction is adenosine 3',5'-bisphosphate + H2O = AMP + phosphate. It catalyses the reaction adenosine 2',5'-bisphosphate + H2O = AMP + phosphate. Phosphatase activity is very sensitive to lithium and moderately sensitive to sodium. The inhibitory effects of lithium and sodium are overcome by high concentrations of potassium. Lithium exerts its inhibitory action by blocking the products of the PAP hydrolysis at the active site. Its function is as follows. Phosphatase that converts adenosine 3'-phosphate 5'-phosphosulfate (PAPS) to adenosine 5'-phosphosulfate (APS) and 3'(2')-phosphoadenosine 5'-phosphate (PAP) to AMP. May regulate the flux of sulfur in the sulfur-activation pathway by converting PAPS to APS. Involved in salt tolerance. Confers resistance to lithium. Shows no activity on inositol mono- and diphosphates, 3'-AMP, AMP, nicotinamide adenine dinucleotide phosphate (NADP), and p-nitrophenylphosphate. This chain is 3'(2'),5'-bisphosphate nucleotidase (MET22), found in Saccharomyces cerevisiae (strain ATCC 204508 / S288c) (Baker's yeast).